Consider the following 180-residue polypeptide: MENRLKAKYENEVRPSLIEKFDYSSVMAAPKLEKIVLNMGVGDATQNSKNLDEAVEELGLISGQKPLITKAKKSIAGFRLREGMAIGAKVTLRGTRMYDFLDKLVNVSLPRVRDFRGVSNKAFDGRGNYTLGVREQLIFPEIDYDNVNRVRGLDIVIVTTANSDEEAHELLAQLGMPFAK.

Belongs to the universal ribosomal protein uL5 family. Part of the 50S ribosomal subunit; part of the 5S rRNA/L5/L18/L25 subcomplex. Contacts the 5S rRNA and the P site tRNA. Forms a bridge to the 30S subunit in the 70S ribosome.

This is one of the proteins that bind and probably mediate the attachment of the 5S RNA into the large ribosomal subunit, where it forms part of the central protuberance. In the 70S ribosome it contacts protein S13 of the 30S subunit (bridge B1b), connecting the 2 subunits; this bridge is implicated in subunit movement. Contacts the P site tRNA; the 5S rRNA and some of its associated proteins might help stabilize positioning of ribosome-bound tRNAs. This Limosilactobacillus fermentum (strain NBRC 3956 / LMG 18251) (Lactobacillus fermentum) protein is Large ribosomal subunit protein uL5.